The sequence spans 405 residues: MNHLPMPTFGPLAGVRVVFSGIEIAGPFAGQMFAEWGAEVIWIENVAWADTIRVQPNYPQLSRRNLHALSLNIFKDEGREAFLKLMETTDIFIEASKGPAFARRGITDEVLWEHNPKLVIAHLSGFGQYGTEEYTNLPAYNTIAQAFSGYLIQNGDVDQPMPAFPYTADYFSGMTATTAALAALHKVRETGKGESIDIAMYEVMLRMGQYFMMDYFNGGEICPRMTKGKDPYYAGCGLYKCADGYIVMELVGITQINECFKDIGLAHILGTPEVPEGTQLIHRVECPYGPLVEEKLDAWLAAHTIADVQARFAELNIACAKVLTIPELEGNPQYVARESITQWQTMDGRTCKGPNIMPKFKNNPGKIWRGMPSHGMDTAAILKNIGYSEADIKELVGKGLAKVED.

Lys-97 and Arg-104 together coordinate CoA. Residue Asp-169 is the Nucleophile of the active site.

It belongs to the CoA-transferase III family. CaiB subfamily. In terms of assembly, homodimer.

It localises to the cytoplasm. The enzyme catalyses crotonobetainyl-CoA + (R)-carnitine = crotonobetaine + (R)-carnitinyl-CoA. The catalysed reaction is 4-(trimethylamino)butanoyl-CoA + (R)-carnitine = (R)-carnitinyl-CoA + 4-(trimethylamino)butanoate. The protein operates within amine and polyamine metabolism; carnitine metabolism. Functionally, catalyzes the reversible transfer of the CoA moiety from gamma-butyrobetainyl-CoA to L-carnitine to generate L-carnitinyl-CoA and gamma-butyrobetaine. Is also able to catalyze the reversible transfer of the CoA moiety from gamma-butyrobetainyl-CoA or L-carnitinyl-CoA to crotonobetaine to generate crotonobetainyl-CoA. The sequence is that of L-carnitine CoA-transferase (caiB) from Salmonella typhi.